Reading from the N-terminus, the 154-residue chain is Nuclear cap-binding protein subunit 2 (154 aa).

MRNA is bound by residues Tyr-10, Tyr-33, 102–106, 113–117, and 123–124; these read RVDWD, RQYGR, and QV. The 79-residue stretch at 30–108 folds into the RRM domain; it reads CTLYVGNLSF…RLIRVDWDAG (79 aa).

The protein belongs to the RRM NCBP2 family. In terms of assembly, component of the nuclear cap-binding complex (CBC), a heterodimer composed of Cbp80 and Cbp20 that interacts with m7GpppG-capped RNA. Interacts with Ars2.

It is found in the nucleus. Its function is as follows. Component of the cap-binding complex (CBC), which binds co-transcriptionally to the 5' cap of pre-mRNAs and is involved in various processes such as pre-mRNA splicing and RNA-mediated gene silencing (RNAi). The CBC complex is involved in miRNA-mediated RNA interference via its interaction with Ars2 and is required for primary microRNAs (miRNAs) processing. Also involved in innate immunity via the short interfering RNAs (siRNAs) processing machinery by restricting the viral RNA production. In the CBC complex, Cbp20 recognizes and binds capped RNAs (m7GpppG-capped RNA) but requires Cbp80 to stabilize the movement of its N-terminal loop and lock the CBC into a high affinity cap-binding state with the cap structure. The protein is Nuclear cap-binding protein subunit 2 (Cbp20) of Drosophila yakuba (Fruit fly).